A 156-amino-acid chain; its full sequence is Persephin (156 aa).

Positions 1–21 (MAAGRLRILCLLLLSLHPSLG) are cleaved as a signal peptide. 3 disulfides stabilise this stretch: cysteine 66–cysteine 124, cysteine 93–cysteine 152, and cysteine 97–cysteine 154.

This sequence belongs to the TGF-beta family. GDNF subfamily. As to quaternary structure, homodimer; disulfide-linked. Interacts with GFRA4 coreceptor and RET: forms a 2:2:2 ternary complex composed of PSPN ligand, GFRA4 and RET receptor.

It localises to the secreted. In terms of biological role, growth factor that exhibits neurotrophic activity on mesencephalic dopaminergic and motor neurons. Acts by binding to its coreceptor, GFRA4, leading to autophosphorylation and activation of the RET receptor. The polypeptide is Persephin (Mus musculus (Mouse)).